A 589-amino-acid polypeptide reads, in one-letter code: Complement component C8 beta chain (589 aa).

Positions 1–31 (MKIGAQVWRALAKSCLLCATLGCLHFPGSRG) are cleaved as a signal peptide. The propeptide occupies 32–53 (GKPDFFETKAVNGSLVKSRPVR). N-linked (GlcNAc...) asparagine glycosylation occurs at Asn43. The region spanning 63–116 (DCELSTWSSWTACDPCQKKRYRHTYLLRPSQFYGELCDLSDKEVEDCVTNQPCR) is the TSP type-1 1 domain. Intrachain disulfides connect Cys64–Cys99, Cys75–Cys109, Cys78–Cys115, Cys121–Cys132, Cys126–Cys145, Cys139–Cys154, and Cys161–Cys199. C-linked (Man) tryptophan glycosylation is found at Trp69 and Trp72. The 36-residue stretch at 120-155 (RCEGFVCAQTGRCVNRRLLCNGDNDCGDQSDEANCR) folds into the LDL-receptor class A domain. Ca(2+) is bound by residues Leu137, Asn140, Asp142, Asp144, Asp150, and Glu151. The region spanning 157–503 (IYKNCQREME…EFQSEVSSCR (347 aa)) is the MACPF domain. A run of 8 beta stranded transmembrane segments spans residues 201-206 (PHYILD), 209-213 (FRKPY), 251-258 (FNFTSGFK), 261-268 (GVMDLGIK), 328-335 (SYGEYRDL), 338-343 (DFGTHF), 378-385 (AGGSFGIG), and 391-398 (VYVKVGVS). Residues Cys377 and Cys402 are joined by a disulfide bond. Positions 404-534 (DIMKEINERN…PGGFQGTACE (131 aa)) constitute an EGF-like domain. Thr417 is subject to Phosphothreonine. 4 disulfides stabilise this stretch: Cys502–Cys549, Cys504–Cys520, Cys507–Cys522, and Cys524–Cys533. One can recognise a TSP type-1 2 domain in the interval 544–587 (DGKWSCWSDWSACSGGHKTRHRQCNNPAPHKGGSPCSGPASETL). Residues Trp550 and Trp553 are each glycosylated (C-linked (Man) tryptophan). Cys556 and Cys589 are disulfide-bonded. The tract at residues 570 to 589 (PAPHKGGSPCSGPASETLNC) is disordered.

This sequence belongs to the complement C6/C7/C8/C9 family. As to quaternary structure, heterotrimer of 3 chains: alpha (C8A), beta (C8B) and gamma (C8G); the alpha and gamma chains are disulfide bonded. Component of the membrane attack complex (MAC), composed of complement C5b, C6, C7, C8A, C8B, C8G and multiple copies of the pore-forming subunit C9. In terms of processing, N-glycosylated; contains one or two bound glycans. Not O-glycosylated.

Its subcellular location is the secreted. It localises to the target cell membrane. Membrane attack complex (MAC) assembly is inhibited by CD59, thereby protecting self-cells from damage during complement activation. CD59 acts by binding to the beta-haipins of C8 (C8A and C8B), forming an intermolecular beta-sheet that prevents incorporation of the multiple copies of C9 required for complete formation of the osmolytic pore. MAC assembly is also inhibited by clusterin (CLU) chaperones that inhibit polymerization of C9. Its function is as follows. Component of the membrane attack complex (MAC), a multiprotein complex activated by the complement cascade, which inserts into a target cell membrane and forms a pore, leading to target cell membrane rupture and cell lysis. The MAC is initiated by proteolytic cleavage of C5 into complement C5b in response to the classical, alternative, lectin and GZMK complement pathways. The complement pathways consist in a cascade of proteins that leads to phagocytosis and breakdown of pathogens and signaling that strengthens the adaptive immune system. C8B, together with C8A and C8G, inserts into the target membrane, but does not form pores by itself. During MAC assembly, associates with C5b, C6 and C7 to form the C5b8 intermediate complex that inserts into the target membrane and traverses the bilayer increasing membrane rigidity. This Mus musculus (Mouse) protein is Complement component C8 beta chain (C8b).